The sequence spans 900 residues: Minor teichoic acid biosynthesis protein GgaB (900 aa).

The protein belongs to the glycosyltransferase 2 family.

The protein operates within cell wall biogenesis; poly(glucopyranosyl N-acetylgalactosamine 1-phosphate) teichoic acid biosynthesis. Its function is as follows. Involved in the biosynthesis of galactosamine-containing minor teichoic acid, a non-essential cell wall polymer in B.subtilis 168. In Bacillus subtilis (strain 168), this protein is Minor teichoic acid biosynthesis protein GgaB (ggaB).